We begin with the raw amino-acid sequence, 1584 residues long: Pentafunctional AROM polypeptide (1584 aa).

The tract at residues 1–384 (MSQDTDVVSV…YEKHATVVSD (384 aa)) is 3-dehydroquinate synthase. NAD(+) is bound by residues 46–48 (DTN), 83–86 (ETSK), 114–116 (GGV), and Asp119. Residue Arg130 participates in 7-phospho-2-dehydro-3-deoxy-D-arabino-heptonate binding. NAD(+) is bound at residue 139–140 (TT). 7-phospho-2-dehydro-3-deoxy-D-arabino-heptonate-binding residues include Asp146 and Lys152. Lys161 is an NAD(+) binding site. Asn162 is a 7-phospho-2-dehydro-3-deoxy-D-arabino-heptonate binding site. NAD(+)-binding positions include 179 to 182 (FLET) and Asn190. A Zn(2+)-binding site is contributed by Glu194. 7-phospho-2-dehydro-3-deoxy-D-arabino-heptonate-binding positions include 194-197 (EVIK) and Lys250. Glu260 acts as the Proton acceptor; for 3-dehydroquinate synthase activity in catalysis. 7-phospho-2-dehydro-3-deoxy-D-arabino-heptonate-binding positions include 264–268 (RNLLN) and His271. Zn(2+) is bound at residue His271. His275 functions as the Proton acceptor; for 3-dehydroquinate synthase activity in the catalytic mechanism. Positions 287 and 356 each coordinate 7-phospho-2-dehydro-3-deoxy-D-arabino-heptonate. His287 contributes to the Zn(2+) binding site. Positions 397–843 (VSPFDNSVSD…WDVLRNSFKI (447 aa)) are EPSP synthase. The active-site For EPSP synthase activity is the Cys825. Residues 863 to 1058 (RASVILIGMR…IQKPHSFFLS (196 aa)) form a shikimate kinase region. Residue 870–877 (GMRGAGKT) participates in ATP binding. Residues 1059–1280 (LTFPNINDAI…AAPGQLSVRQ (222 aa)) form a 3-dehydroquinase region. The active-site Proton acceptor; for 3-dehydroquinate dehydratase activity is His1182. The active-site Schiff-base intermediate with substrate; for 3-dehydroquinate dehydratase activity is the Lys1211. A shikimate dehydrogenase region spans residues 1293 to 1584 (PKKFYLFGTP…YMVLCAKEHN (292 aa)).

It in the N-terminal section; belongs to the sugar phosphate cyclases superfamily. Dehydroquinate synthase family. In the 2nd section; belongs to the EPSP synthase family. This sequence in the 3rd section; belongs to the shikimate kinase family. The protein in the 4th section; belongs to the type-I 3-dehydroquinase family. It in the C-terminal section; belongs to the shikimate dehydrogenase family. As to quaternary structure, homodimer. The cofactor is Zn(2+).

It is found in the cytoplasm. It catalyses the reaction 7-phospho-2-dehydro-3-deoxy-D-arabino-heptonate = 3-dehydroquinate + phosphate. The catalysed reaction is 3-dehydroquinate = 3-dehydroshikimate + H2O. It carries out the reaction shikimate + NADP(+) = 3-dehydroshikimate + NADPH + H(+). The enzyme catalyses shikimate + ATP = 3-phosphoshikimate + ADP + H(+). It catalyses the reaction 3-phosphoshikimate + phosphoenolpyruvate = 5-O-(1-carboxyvinyl)-3-phosphoshikimate + phosphate. The protein operates within metabolic intermediate biosynthesis; chorismate biosynthesis; chorismate from D-erythrose 4-phosphate and phosphoenolpyruvate: step 2/7. It functions in the pathway metabolic intermediate biosynthesis; chorismate biosynthesis; chorismate from D-erythrose 4-phosphate and phosphoenolpyruvate: step 3/7. It participates in metabolic intermediate biosynthesis; chorismate biosynthesis; chorismate from D-erythrose 4-phosphate and phosphoenolpyruvate: step 4/7. Its pathway is metabolic intermediate biosynthesis; chorismate biosynthesis; chorismate from D-erythrose 4-phosphate and phosphoenolpyruvate: step 5/7. The protein operates within metabolic intermediate biosynthesis; chorismate biosynthesis; chorismate from D-erythrose 4-phosphate and phosphoenolpyruvate: step 6/7. In terms of biological role, the AROM polypeptide catalyzes 5 consecutive enzymatic reactions in prechorismate polyaromatic amino acid biosynthesis. In Schizosaccharomyces japonicus (strain yFS275 / FY16936) (Fission yeast), this protein is Pentafunctional AROM polypeptide.